We begin with the raw amino-acid sequence, 212 residues long: Large ribosomal subunit protein uL3 (212 aa).

The span at 135-155 (ATHGNSVSHRAHGSTGQNQSP) shows a compositional bias: polar residues. The disordered stretch occupies residues 135-162 (ATHGNSVSHRAHGSTGQNQSPGKVFKGK). Q153 carries the N5-methylglutamine modification.

Belongs to the universal ribosomal protein uL3 family. In terms of assembly, part of the 50S ribosomal subunit. Forms a cluster with proteins L14 and L19. In terms of processing, methylated by PrmB.

In terms of biological role, one of the primary rRNA binding proteins, it binds directly near the 3'-end of the 23S rRNA, where it nucleates assembly of the 50S subunit. This is Large ribosomal subunit protein uL3 from Psychrobacter arcticus (strain DSM 17307 / VKM B-2377 / 273-4).